The chain runs to 914 residues: Trafficking kinesin-binding protein 2 (914 aa).

The segment covering 1-21 has biased composition (polar residues); the sequence is MSQSQNAIFTSPTGEENLMNS. Positions 1–30 are disordered; that stretch reads MSQSQNAIFTSPTGEENLMNSNHRDSESIT. The HAP1 N-terminal domain occupies 48 to 353; it reads EEQLPQYRLK…QEEIKELRSR (306 aa). A coiled-coil region spans residues 134–354; that stretch reads QALLKRNHVL…EEIKELRSRS (221 aa). The segment at 359–509 is interaction with HGS; the sequence is HLYFSQSYGA…KQFFAEEWQR (151 aa). At S420 the chain carries Phosphoserine. Disordered regions lie at residues 447–482 and 765–787; these read QQTE…DSDL and QPLP…SPCP. The segment covering 454–471 has biased composition (polar residues); it reads LLNQGSSSEEVAGSSQKM. The span at 775-787 shows a compositional bias: pro residues; it reads STPPNSPSHSPCP.

Belongs to the milton family. As to quaternary structure, interacts with GABA-A receptor and O-GlcNAc transferase. Interacts with HGS. Interacts with RHOT1/Miro-1 and RHOT2/Miro-2. Post-translationally, O-glycosylated. Widely expressed, with highest expression in heart.

The protein resides in the cytoplasm. It localises to the early endosome. It is found in the mitochondrion. Its function is as follows. May regulate endosome-to-lysosome trafficking of membrane cargo, including EGFR. The protein is Trafficking kinesin-binding protein 2 (TRAK2) of Homo sapiens (Human).